Reading from the N-terminus, the 592-residue chain is Pectinesterase/pectinesterase inhibitor 3 (592 aa).

Positions 1-35 (MAPSMKEIFSKDNFKKNKKLVLLSAAVALLFVAAV) are cleaved as a signal peptide. Positions 36–238 (AGISAGASKA…KITSNNRKLK (203 aa)) are cleaved as a propeptide — removed in mature 42 kDa form. The propeptide at 36–273 (AGISAGASKA…WLSAGDRRLL (238 aa)) is removed in mature 38 kDa form. The segment at 53 to 212 (PSSHAVLRSS…EHMCSNALAM (160 aa)) is pectinesterase inhibitor 3. N-linked (GlcNAc...) asparagine glycosylation is found at Asn96 and Asn215. The segment at 281 to 578 (DATVAADGSG…YTAGQFIGGG (298 aa)) is pectinesterase 3. Substrate contacts are provided by Thr356 and Gln386. Catalysis depends on Asp409, which acts as the Proton donor; for pectinesterase activity. Residues Cys423 and Cys443 are joined by a disulfide bond. Catalysis depends on Asp430, which acts as the Nucleophile; for pectinesterase activity. Substrate-binding residues include Gln454, Arg498, and Trp500.

The protein in the N-terminal section; belongs to the PMEI family. It in the C-terminal section; belongs to the pectinesterase family. As to quaternary structure, interacts with BIIDXI and At5g11420. Binds reversibly to PMEI4, PMEI7 and PMEI8 to be inhibited; the stability of the PME3-PMEIs complexes and the inhibition of the pectin methylesterase (PME) activity is pH-dependent, based on protonation status of amino-acids at the complex interface. Expressed in roots, cotyledons, hypocotyls, seedlings, leaves, stems, flowers, dry seeds and siliques. Accumulates in etiolated hypocotyls (at protein level).

It is found in the secreted. The protein localises to the extracellular space. It localises to the apoplast. Its subcellular location is the cell wall. It catalyses the reaction [(1-&gt;4)-alpha-D-galacturonosyl methyl ester](n) + n H2O = [(1-&gt;4)-alpha-D-galacturonosyl](n) + n methanol + n H(+). It participates in glycan metabolism; pectin degradation; 2-dehydro-3-deoxy-D-gluconate from pectin: step 1/5. Its activity is regulated as follows. Regulated negatively by pectinesterase inhibitors (e.g. PMEI3, PMEI4, PMEI7 and PMEI9) in a pH-dependent manner, mainly in slightly acidic conditions (pH 6.0 and 5.0), especially in dark-grown hypocotyls; this processus relies on changes in the protonation of amino acids involved in intermolecular and intramolecular interactions. Acts in the modification of cell walls via demethylesterification of cell wall pectin. Required for zinc Zn(2+) homeostasis and to monitor Zn(2+) influence on cell wall-controlled growth processes such as root cell elongation. Monitors seed germination and favors root hairs production. Prevents cruciferin seed storage proteins activity, but promotes the expression of genes involved in cell wall organization and remodeling as well as genes involved in lipid and protein metabolism, during post-germinative growth of seedlings. Confers sensitivity to Zn(2+) when overexpressed. Acts as a susceptibility factor required for the initial colonization of the host tissue by virulent pathogens including Botrytis cinerea and Pectobacterium carotovorum, probably by facilitating cell wall pectine degradation by pathogen pectic enzymes after its demethylesterification. This chain is Pectinesterase/pectinesterase inhibitor 3, found in Arabidopsis thaliana (Mouse-ear cress).